A 286-amino-acid chain; its full sequence is Formamidopyrimidine-DNA glycosylase (286 aa).

P2 serves as the catalytic Schiff-base intermediate with DNA. E3 functions as the Proton donor in the catalytic mechanism. K60 (proton donor; for beta-elimination activity) is an active-site residue. Residues H103, R122, and R167 each coordinate DNA. The FPG-type zinc-finger motif lies at 252-286; it reads WVYRRNQKPCRKCGTLIEKTKVAGRSTHWCPNCQN. The active-site Proton donor; for delta-elimination activity is the R276.

It belongs to the FPG family. In terms of assembly, monomer. Zn(2+) serves as cofactor.

The enzyme catalyses Hydrolysis of DNA containing ring-opened 7-methylguanine residues, releasing 2,6-diamino-4-hydroxy-5-(N-methyl)formamidopyrimidine.. It carries out the reaction 2'-deoxyribonucleotide-(2'-deoxyribose 5'-phosphate)-2'-deoxyribonucleotide-DNA = a 3'-end 2'-deoxyribonucleotide-(2,3-dehydro-2,3-deoxyribose 5'-phosphate)-DNA + a 5'-end 5'-phospho-2'-deoxyribonucleoside-DNA + H(+). Involved in base excision repair of DNA damaged by oxidation or by mutagenic agents. Acts as a DNA glycosylase that recognizes and removes damaged bases. Has a preference for oxidized purines, such as 7,8-dihydro-8-oxoguanine (8-oxoG). Has AP (apurinic/apyrimidinic) lyase activity and introduces nicks in the DNA strand. Cleaves the DNA backbone by beta-delta elimination to generate a single-strand break at the site of the removed base with both 3'- and 5'-phosphates. This chain is Formamidopyrimidine-DNA glycosylase, found in Prochlorococcus marinus (strain MIT 9211).